Reading from the N-terminus, the 514-residue chain is Leucine-rich repeat-containing protein 14B (514 aa).

One copy of the LRR 1; degenerate repeat lies at 104–141 (RRRLRVADLTGIRDVQVQRCPCGRALGRWGRTQLLART). Residues 185 to 209 (RVHCPSFRADSLSPSQLLHVLRLAG) form an LRR 2; degenerate repeat. One copy of the LRR 4; degenerate repeat lies at 238–277 (FPRLASLTLPTKAFDAPPTYASTPDGEDPLLASIARELSK). LRR repeat units lie at residues 278–302 (MAQL…LGPL), 303–334 (QTPL…AHLE), 335–350 (VLDL…YPST), 359–386 (SRTL…GLSP), and 387–411 (CHRL…LFTA).

This sequence belongs to the PRAME family. LRRC14 subfamily.

The protein is Leucine-rich repeat-containing protein 14B of Homo sapiens (Human).